The chain runs to 152 residues: UPF0266 membrane protein YobD (152 aa).

Transmembrane regions (helical) follow at residues 6–26 (LVLI…QFIM), 45–65 (IDSV…VTNH), and 67–87 (ALIT…IFWI).

It belongs to the UPF0266 family.

Its subcellular location is the cell inner membrane. This is UPF0266 membrane protein YobD from Escherichia coli O45:K1 (strain S88 / ExPEC).